Reading from the N-terminus, the 147-residue chain is Methylated-DNA--protein-cysteine methyltransferase (147 aa).

Cys112 serves as the catalytic Nucleophile; methyl group acceptor.

Belongs to the MGMT family.

The protein localises to the cytoplasm. It carries out the reaction a 6-O-methyl-2'-deoxyguanosine in DNA + L-cysteinyl-[protein] = S-methyl-L-cysteinyl-[protein] + a 2'-deoxyguanosine in DNA. It catalyses the reaction a 4-O-methyl-thymidine in DNA + L-cysteinyl-[protein] = a thymidine in DNA + S-methyl-L-cysteinyl-[protein]. Its function is as follows. Involved in the cellular defense against the biological effects of O6-methylguanine (O6-MeG) and O4-methylthymine (O4-MeT) in DNA. Repairs the methylated nucleobase in DNA by stoichiometrically transferring the methyl group to a cysteine residue in the enzyme. This is a suicide reaction: the enzyme is irreversibly inactivated. The chain is Methylated-DNA--protein-cysteine methyltransferase from Archaeoglobus fulgidus (strain ATCC 49558 / DSM 4304 / JCM 9628 / NBRC 100126 / VC-16).